Here is a 163-residue protein sequence, read N- to C-terminus: SsrA-binding protein (163 aa).

This sequence belongs to the SmpB family.

The protein resides in the cytoplasm. Required for rescue of stalled ribosomes mediated by trans-translation. Binds to transfer-messenger RNA (tmRNA), required for stable association of tmRNA with ribosomes. tmRNA and SmpB together mimic tRNA shape, replacing the anticodon stem-loop with SmpB. tmRNA is encoded by the ssrA gene; the 2 termini fold to resemble tRNA(Ala) and it encodes a 'tag peptide', a short internal open reading frame. During trans-translation Ala-aminoacylated tmRNA acts like a tRNA, entering the A-site of stalled ribosomes, displacing the stalled mRNA. The ribosome then switches to translate the ORF on the tmRNA; the nascent peptide is terminated with the 'tag peptide' encoded by the tmRNA and targeted for degradation. The ribosome is freed to recommence translation, which seems to be the essential function of trans-translation. In Buchnera aphidicola subsp. Schizaphis graminum (strain Sg), this protein is SsrA-binding protein.